Consider the following 378-residue polypeptide: L-lactate dehydrogenase (378 aa).

The FMN hydroxy acid dehydrogenase domain maps to 1-378 (MIISASTDYR…ELSRDSLVKR (378 aa)). Tyr24 provides a ligand contact to substrate. 2 residues coordinate FMN: Ser106 and Gln127. Substrate is bound at residue Tyr129. Thr155 provides a ligand contact to FMN. Arg164 contributes to the substrate binding site. Lys251 provides a ligand contact to FMN. The active-site Proton acceptor is the His275. Residue Arg278 coordinates substrate. 306 to 330 (DSGIRTGLDVVRMLALGADCTMLGR) is a binding site for FMN.

Belongs to the FMN-dependent alpha-hydroxy acid dehydrogenase family. Requires FMN as cofactor.

The protein resides in the cell inner membrane. The catalysed reaction is (S)-lactate + A = pyruvate + AH2. In terms of biological role, catalyzes the conversion of L-lactate to pyruvate. Is coupled to the respiratory chain. This is L-lactate dehydrogenase from Vibrio cholerae serotype O1 (strain ATCC 39315 / El Tor Inaba N16961).